Consider the following 373-residue polypeptide: UDP-N-acetylglucosamine--N-acetylmuramyl-(pentapeptide) pyrophosphoryl-undecaprenol N-acetylglucosamine transferase (373 aa).

UDP-N-acetyl-alpha-D-glucosamine contacts are provided by residues 13-15 (TGG), N124, R164, S192, and Q293.

It belongs to the glycosyltransferase 28 family. MurG subfamily.

The protein localises to the cell inner membrane. It catalyses the reaction di-trans,octa-cis-undecaprenyl diphospho-N-acetyl-alpha-D-muramoyl-L-alanyl-D-glutamyl-meso-2,6-diaminopimeloyl-D-alanyl-D-alanine + UDP-N-acetyl-alpha-D-glucosamine = di-trans,octa-cis-undecaprenyl diphospho-[N-acetyl-alpha-D-glucosaminyl-(1-&gt;4)]-N-acetyl-alpha-D-muramoyl-L-alanyl-D-glutamyl-meso-2,6-diaminopimeloyl-D-alanyl-D-alanine + UDP + H(+). Its pathway is cell wall biogenesis; peptidoglycan biosynthesis. Cell wall formation. Catalyzes the transfer of a GlcNAc subunit on undecaprenyl-pyrophosphoryl-MurNAc-pentapeptide (lipid intermediate I) to form undecaprenyl-pyrophosphoryl-MurNAc-(pentapeptide)GlcNAc (lipid intermediate II). The polypeptide is UDP-N-acetylglucosamine--N-acetylmuramyl-(pentapeptide) pyrophosphoryl-undecaprenol N-acetylglucosamine transferase (Allorhizobium ampelinum (strain ATCC BAA-846 / DSM 112012 / S4) (Agrobacterium vitis (strain S4))).